The sequence spans 781 residues: Dual specificity protein kinase zakA (781 aa).

2 consecutive Protein kinase domains span residues Trp9–Ile317 and Asp379–Leu654. ATP is bound by residues Ile15 to Val23 and Lys44. Residue Asp132 is the Proton acceptor of the active site. Residues Glu168–Asn209 are disordered. The segment covering Asn171–Asn209 has biased composition (low complexity). ATP-binding positions include Gly385 to Val393 and Lys406. Asp507 serves as the catalytic Proton acceptor.

This sequence in the N-terminal section; belongs to the protein kinase superfamily. Ser/Thr protein kinase family. The protein in the C-terminal section; belongs to the protein kinase superfamily. TKL Tyr protein kinase family. N-terminal serine/threonine domain is capable of autophosphorylation, in vitro, but to a lower extent than the tyrosine kinase domain. May function as a negative regulator of the tyrosine kinase domain. In terms of processing, C-terminal tyrosine kinase domain is capable of autophosphorylation, in vitro. ZakA and zak2 are coexpressed in prestalk cell population, zakA is enriched in pstB populations and zak1 in pstA populations. ZakA and zak2 are coexpressed in prespore cells, zakA expression levels are 10 fold higher than zak2.

The catalysed reaction is L-seryl-[protein] + ATP = O-phospho-L-seryl-[protein] + ADP + H(+). It carries out the reaction L-threonyl-[protein] + ATP = O-phospho-L-threonyl-[protein] + ADP + H(+). The enzyme catalyses L-tyrosyl-[protein] + ATP = O-phospho-L-tyrosyl-[protein] + ADP + H(+). Functionally, positive regulator of gsk3/gskA activity required for cell pattern formation and a downstream effector of carC. The kinases, gsk3/gskA, zakA and zak2, form part of a signaling pathway that responds to extracellular cyclic AMP. The pathway has a role in transcriptional regulation; required to direct prespore/spore fates during development. ZakA negatively regulates prestalk differentiation by regulating expression of ecmB. Phosphorylates Y-214 of gsk3/gskA, in vitro. This is Dual specificity protein kinase zakA (zakA) from Dictyostelium discoideum (Social amoeba).